The sequence spans 104 residues: Protein EPIDERMAL PATTERNING FACTOR 1 (104 aa).

Residues 1-20 (MKSLLLLAFFLSFFFGSLLA) form the signal peptide. 4 disulfides stabilise this stretch: cysteine 60-cysteine 94, cysteine 64-cysteine 70, cysteine 67-cysteine 96, and cysteine 79-cysteine 88. A glycan (N-linked (GlcNAc...) asparagine) is linked at asparagine 98.

It belongs to the plant cysteine rich small secretory peptide family. Epidermal patterning factor subfamily. Interacts with ERECTA and ERL1, but not with TMM. As to expression, expressed in shoots, but not in roots. Mostly localized in developing leaves, specifically in meristemoids, guard mother cells (GMCs), and young guard cells.

The protein resides in the secreted. In terms of biological role, controls stomatal patterning. Regulates asymmetric cell division during guard cell differentiation. Mediates stomatal development inhibition. Not cleaved by the protease CRSP (AC Q9LNU1). MEPF1: mobile signal controlling stomatal development in a non-cell-autonomous manner. Uses ERL1 as major receptor. May act by competing with somatogen (AC Q9SV72) for the same receptor, TMM (AC Q9SSD1). The sequence is that of Protein EPIDERMAL PATTERNING FACTOR 1 from Arabidopsis thaliana (Mouse-ear cress).